A 232-amino-acid polypeptide reads, in one-letter code: MMYQQGCFAGGTVLRLAKDLAENNKGARVLVVCSEITAVTFRGPSDTHLDSLVGQALFGDGAAAVIIGADPVPEVEKPLFELVSAAQTVLPDSDGAIDGHLREVGLTFHLLKDVPGLISKNIEKSLNEALKPIGISDWNSLFWIAHPGGPAILDQVEAKLALKPEKLEATRQVLSDYGNMSSACVLFILDEVRRKSAEKGLETTGEGLEWGVLFGFGPGLTVETVVLHSVAA.

The active site involves C7.

It belongs to the thiolase-like superfamily. Chalcone/stilbene synthases family.

The catalysed reaction is (E)-4-coumaroyl-CoA + 3 malonyl-CoA + 3 H(+) = 2',4,4',6'-tetrahydroxychalcone + 3 CO2 + 4 CoA. The protein operates within secondary metabolite biosynthesis; flavonoid biosynthesis. The primary product of this enzyme is 4,2',4',6'-tetrahydroxychalcone (also termed naringenin-chalcone or chalcone) which can under specific conditions spontaneously isomerize into naringenin. This chain is Chalcone synthase (CHS), found in Malus domestica (Apple).